The primary structure comprises 142 residues: Tol-Pal system protein TolR (142 aa).

Over 1-17 the chain is Cytoplasmic; that stretch reads MARARGRGRRDLKSEIN. Residues 18–38 traverse the membrane as a helical segment; that stretch reads IVPLLDVLLVLLLIFMATAPI. The Periplasmic portion of the chain corresponds to 39-142; the sequence is ITQSVEVDLP…KSVGLMTQPI (104 aa).

This sequence belongs to the ExbD/TolR family. In terms of assembly, the Tol-Pal system is composed of five core proteins: the inner membrane proteins TolA, TolQ and TolR, the periplasmic protein TolB and the outer membrane protein Pal. They form a network linking the inner and outer membranes and the peptidoglycan layer.

The protein resides in the cell inner membrane. In terms of biological role, part of the Tol-Pal system, which plays a role in outer membrane invagination during cell division and is important for maintaining outer membrane integrity. Required, with TolQ, for the proton motive force-dependent activation of TolA and for TolA-Pal interaction. In Escherichia coli O157:H7, this protein is Tol-Pal system protein TolR.